Here is a 340-residue protein sequence, read N- to C-terminus: Aldose 1-epimerase (340 aa).

Arg77 is a binding site for substrate. The active-site Proton donor is His172. Asp243 is a substrate binding site. Glu305 (proton acceptor) is an active-site residue.

It belongs to the aldose epimerase family.

The protein resides in the cytoplasm. The catalysed reaction is alpha-D-glucose = beta-D-glucose. It functions in the pathway carbohydrate metabolism; hexose metabolism. In terms of biological role, mutarotase converts alpha-aldose to the beta-anomer. It is active on D-glucose, L-arabinose, D-xylose, D-galactose, maltose and lactose. The protein is Aldose 1-epimerase (galM) of Haemophilus influenzae (strain ATCC 51907 / DSM 11121 / KW20 / Rd).